The primary structure comprises 763 residues: Amine oxidase [copper-containing] 3 (763 aa).

Residues 1 to 6 (MNQKTT) lie on the Cytoplasmic side of the membrane. Residues 7 to 27 (LVLLALAVITIFALVCVLIAG) form a helical; Signal-anchor for type II membrane protein membrane-spanning segment. The Extracellular portion of the chain corresponds to 28–763 (RGGDGGEASQ…AFSHGGFFTN (736 aa)). Asn-137 carries an N-linked (GlcNAc...) asparagine glycan. The cysteines at positions 198 and 199 are disulfide-linked. Residues Asn-232 and Asn-294 are each glycosylated (N-linked (GlcNAc...) asparagine). Asp-386 (proton acceptor) is an active-site residue. The cysteines at positions 404 and 430 are disulfide-linked. Tyr-471 acts as the Schiff-base intermediate with substrate; via topaquinone in catalysis. A 2',4',5'-topaquinone modification is found at Tyr-471. Cu(2+) is bound by residues His-520 and His-522. Residues Asp-529, Leu-530, Asp-531, and Glu-572 each contribute to the Ca(2+) site. A glycan (N-linked (GlcNAc...) asparagine) is linked at Asn-618. Ca(2+)-binding residues include Glu-641, Phe-663, and Asn-665. A glycan (N-linked (GlcNAc...) asparagine) is linked at Asn-666. Positions 667, 673, and 674 each coordinate Ca(2+). His-684 serves as a coordination point for Cu(2+). Cys-734 and Cys-741 are disulfide-bonded.

Belongs to the copper/topaquinone oxidase family. In terms of assembly, homodimer; disulfide-linked. Probably forms heterodimers with AOC2. It depends on Cu(2+) as a cofactor. Ca(2+) is required as a cofactor. Requires L-topaquinone as cofactor. In terms of processing, topaquinone (TPQ) is generated by copper-dependent autoxidation of a specific tyrosyl residue. N- and O-glycosylated.

It is found in the cell membrane. The enzyme catalyses methylamine + O2 + H2O = formaldehyde + H2O2 + NH4(+). The catalysed reaction is benzylamine + O2 + H2O = benzaldehyde + H2O2 + NH4(+). It carries out the reaction 2-phenylethylamine + O2 + H2O = 2-phenylacetaldehyde + H2O2 + NH4(+). Its function is as follows. Catalyzes the oxidative deamination of primary amines to the corresponding aldehydes with the concomitant production of hydrogen peroxide and ammonia. Has a preference for the primary monoamines methylamine and benzylamine. Could also act on 2-phenylethylamine but much less efficiently. At endothelial cells surface can also function as a cell adhesion protein that participates in lymphocyte extravasation and recirculation by mediating the binding of lymphocytes to peripheral lymph node vascular endothelial cells in an L-selectin-independent fashion. The chain is Amine oxidase [copper-containing] 3 from Bos taurus (Bovine).